We begin with the raw amino-acid sequence, 584 residues long: Sodium/calcium exchanger NCL1 (584 aa).

Transmembrane regions (helical) follow at residues 77-97, 120-140, 154-174, 215-235, and 245-265; these read FLPC…YGFL, LVGG…LVLV, VLIG…LLWG, AARI…PKML, and VLLA…YQVF. 2 consecutive EF-hand domains span residues 305-340 and 345-380; these read PNED…INFE and DKND…WLNE. Residues Asp318, Asp320, Ser322, Thr324, Glu329, Asp358, Ser360, Asn362, and Glu369 each contribute to the Ca(2+) site. 5 helical membrane passes run 426–446, 466–486, 504–524, 531–551, and 561–581; these read WCIT…AAFA, FISF…SAII, YGGV…LIYI, FSSE…FTSF, and LVAY…DFVF.

The protein belongs to the Ca(2+):cation antiporter (CaCA) (TC 2.A.19) family.

The protein localises to the cell membrane. Its function is as follows. May function as a sodium/calcium exchanger (NCX) and participate in the maintenance of calcium homeostasis. May play a role abiotic stress responses. The protein is Sodium/calcium exchanger NCL1 of Oryza sativa subsp. japonica (Rice).